A 173-amino-acid chain; its full sequence is ATP synthase subunit beta, mitochondrial (173 aa).

This sequence belongs to the ATPase alpha/beta chains family. As to quaternary structure, F-type ATPases have 2 components, CF(1) - the catalytic core - and CF(0) - the membrane proton channel. CF(1) has five subunits: alpha(3), beta(3), gamma(1), delta(1), epsilon(1). CF(0) has three main subunits: a, b and c.

The protein localises to the mitochondrion. It is found in the mitochondrion inner membrane. The enzyme catalyses ATP + H2O + 4 H(+)(in) = ADP + phosphate + 5 H(+)(out). Mitochondrial membrane ATP synthase (F(1)F(0) ATP synthase or Complex V) produces ATP from ADP in the presence of a proton gradient across the membrane which is generated by electron transport complexes of the respiratory chain. F-type ATPases consist of two structural domains, F(1) - containing the extramembraneous catalytic core and F(0) - containing the membrane proton channel, linked together by a central stalk and a peripheral stalk. During catalysis, ATP synthesis in the catalytic domain of F(1) is coupled via a rotary mechanism of the central stalk subunits to proton translocation. Subunits alpha and beta form the catalytic core in F(1). Rotation of the central stalk against the surrounding alpha(3)beta(3) subunits leads to hydrolysis of ATP in three separate catalytic sites on the beta subunits. This chain is ATP synthase subunit beta, mitochondrial (ATPB), found in Actinidia deliciosa (Kiwi).